The following is a 570-amino-acid chain: Dual specificity testis-specific protein kinase 2 (570 aa).

The region spanning 58–313 (DFTREKIGSG…EIGKTLKEIM (256 aa)) is the Protein kinase domain. Residues 64–72 (IGSGFFSEV) and K87 contribute to the ATP site. The active-site Proton acceptor is the D176. The residue at position 219 (S219) is a Phosphoserine; by autocatalysis. A compositionally biased stretch (basic and acidic residues) spans 316-327 (LPEEELERDRKL). Residues 316–357 (LPEEELERDRKLQPTAKGPLEKVPGGKRLSSLDDKIPHKSPR) are disordered. S369, S456, and S460 each carry phosphoserine. A disordered region spans residues 511 to 530 (AMDCSNPQEENGFGPRLKGT).

This sequence belongs to the protein kinase superfamily. TKL Ser/Thr protein kinase family. Mg(2+) is required as a cofactor. It depends on Mn(2+) as a cofactor.

The protein resides in the nucleus. The catalysed reaction is L-seryl-[protein] + ATP = O-phospho-L-seryl-[protein] + ADP + H(+). It catalyses the reaction L-threonyl-[protein] + ATP = O-phospho-L-threonyl-[protein] + ADP + H(+). The enzyme catalyses L-tyrosyl-[protein] + ATP = O-phospho-L-tyrosyl-[protein] + ADP + H(+). Its activity is regulated as follows. Activated by autophosphorylation on Ser-219. Its function is as follows. Dual specificity protein kinase activity catalyzing autophosphorylation and phosphorylation of exogenous substrates on both serine/threonine and tyrosine residues. Phosphorylates cofilin at 'Ser-3'. May play an important role in spermatogenesis. This chain is Dual specificity testis-specific protein kinase 2 (Tesk2), found in Mus musculus (Mouse).